Reading from the N-terminus, the 166-residue chain is Myosin regulatory light chain 2, ventricular/cardiac muscle isoform (166 aa).

Ser-2 is subject to N,N,N-trimethylserine. At Asn-14 the chain carries Deamidated asparagine. Ser-19 bears the Phosphoserine mark. EF-hand domains are found at residues 24–59, 94–129, and 130–165; these read TQIQ…LGRV, DPEE…QAER, and FSKE…GEEK. The Ca(2+) site is built by Asp-37, Asn-39, Asp-41, and Asp-48. At Thr-52 the chain carries Phosphothreonine.

As to quaternary structure, myosin is a hexamer of 2 heavy chains and 4 light chains. Interacts with MYOC. N-terminus is methylated by METTL11A/NTM1. In terms of processing, phosphorylated by MYLK3 and MYLK2; promotes cardiac muscle contraction and function. Dephosphorylated by PPP1CB complexed to PPP1R12B. The phosphorylated form in adult is expressed as gradients across the heart from endocardium (low phosphorylation) to epicardium (high phosphorylation); regulates cardiac torsion and workload distribution.

Its subcellular location is the cytoplasm. The protein resides in the myofibril. The protein localises to the sarcomere. It is found in the a band. In terms of biological role, contractile protein that plays a role in heart development and function. Following phosphorylation, plays a role in cross-bridge cycling kinetics and cardiac muscle contraction by increasing myosin lever arm stiffness and promoting myosin head diffusion; as a consequence of the increase in maximum contraction force and calcium sensitivity of contraction force. These events altogether slow down myosin kinetics and prolong duty cycle resulting in accumulated myosins being cooperatively recruited to actin binding sites to sustain thin filament activation as a means to fine-tune myofilament calcium sensitivity to force. During cardiogenesis plays an early role in cardiac contractility by promoting cardiac myofibril assembly. This chain is Myosin regulatory light chain 2, ventricular/cardiac muscle isoform, found in Bos taurus (Bovine).